The chain runs to 113 residues: UPF0145 protein TK1926 (113 aa).

It belongs to the UPF0145 family.

This is UPF0145 protein TK1926 from Thermococcus kodakarensis (strain ATCC BAA-918 / JCM 12380 / KOD1) (Pyrococcus kodakaraensis (strain KOD1)).